Here is a 141-residue protein sequence, read N- to C-terminus: MVHFQLPVAAPLCLLCALLLLPSATMIPGGLSPRSVSDPDVQKAAAFAVQEYNARSANAHYYKELRVVEAQSQVVAGEKYYLMMELVKTKCAKTAGKPKVYKEIQNCELPPKAQQEKLTCHFQVWSRPWLDKTELTKMSCN.

The N-terminal stretch at 1-26 (MVHFQLPVAAPLCLLCALLLLPSATM) is a signal peptide. One can recognise a Cystatin domain in the interval 29–129 (GGLSPRSVSD…CHFQVWSRPW (101 aa)). A Secondary area of contact motif is present at residues 73-77 (QVVAG). 2 disulfides stabilise this stretch: Cys91-Cys107 and Cys120-Cys140.

Belongs to the cystatin family. As to expression, expressed at a low level by the venom gland (at protein level).

The protein resides in the secreted. Inhibits various C1 cysteine proteases including cathepsin L, papain and cathepsin B. This protein has no toxic activity and its function in the venom is unknown. It may play a role as a housekeeping or regulatory protein. This is Cystatin from Naja kaouthia (Monocled cobra).